A 291-amino-acid polypeptide reads, in one-letter code: Protease HtpX homolog (291 aa).

The next 2 helical transmembrane spans lie at valine 4–leucine 24 and leucine 38–leucine 58. Histidine 144 is a binding site for Zn(2+). Glutamate 145 is a catalytic residue. Histidine 148 serves as a coordination point for Zn(2+). A run of 2 helical transmembrane segments spans residues leucine 159 to leucine 179 and isoleucine 199 to phenylalanine 219. Glutamate 224 is a binding site for Zn(2+).

The protein belongs to the peptidase M48B family. It depends on Zn(2+) as a cofactor.

The protein localises to the cell inner membrane. The polypeptide is Protease HtpX homolog (Chlorobium luteolum (strain DSM 273 / BCRC 81028 / 2530) (Pelodictyon luteolum)).